Reading from the N-terminus, the 463-residue chain is MDFSGLFLTLSAAALFLCLLRFIAGVRRSSSTKLPLPPGTMGYPYVGETFQLYSQDPNVFFAAKQRRYGSVFKTHVLGCPCVMISSPEAAKFVLVTKSHLFKPTFPASKERMLGKQAIFFHQGDYHSKLRKLVLRAFMPDAIRNMVPHIESIAQESLNSWDGTQLNTYQEMKTYTFNVALISILGKDEVYYREDLKRCYYILEKGYNSMPINLPGTLFHKAMKARKELAQILANILSKRRQNPSSHTDLLGSFMEDKAGLTDEQIADNIIGVIFAARDTTASVLTWILKYLADNPTVLEAVTEEQMAIRKDKKEGESLTWEDTKKMPLTYRVIQETLRAATILSFTFREAVEDVEYEGYLIPKGWKVLPLFRNIHHNADIFSDPGKFDPSRFEVAPKPNTFMPFGSGIHSCPGNELAKLEISVLIHHLTTKYRWSIVGPSDGIQYGPFALPQNGLPIALERKP.

A helical membrane pass occupies residues 6–26 (LFLTLSAAALFLCLLRFIAGV). Cysteine 411 lines the heme pocket.

It belongs to the cytochrome P450 family. Heme is required as a cofactor. Mainly expressed in flower buds, flowers, rosette leaves and roots. Lower expression in mature siliques and inflorescence stems. Not expressed in dry seeds.

It is found in the membrane. The enzyme catalyses 2-cis-(+)-abscisate + reduced [NADPH--hemoprotein reductase] + O2 = (+)-8'-hydroxyabscisate + oxidized [NADPH--hemoprotein reductase] + H2O + H(+). It functions in the pathway plant hormone degradation; abscisic acid degradation. With respect to regulation, inhibited by tetcyclcis, but not by metyrapone. Its function is as follows. Involved in the oxidative degradation of abscisic acid, but not in the isomerization of the produced 8'-hydroxyabscisic acid (8'-OH-ABA) to (-)-phaseic acid (PA). Involved in the control of postgermination growth. In Arabidopsis thaliana (Mouse-ear cress), this protein is Abscisic acid 8'-hydroxylase 3 (CYP707A3).